Reading from the N-terminus, the 335-residue chain is Beta-ketoacyl-[acyl-carrier-protein] synthase III 1 (335 aa).

Active-site residues include Cys-116 and His-256. An ACP-binding region spans residues 257 to 261 (QANQR). Residue Asn-286 is part of the active site.

Belongs to the thiolase-like superfamily. FabH family. In terms of assembly, homodimer.

It localises to the cytoplasm. It catalyses the reaction malonyl-[ACP] + acetyl-CoA + H(+) = 3-oxobutanoyl-[ACP] + CO2 + CoA. It participates in lipid metabolism; fatty acid biosynthesis. Functionally, catalyzes the condensation reaction of fatty acid synthesis by the addition to an acyl acceptor of two carbons from malonyl-ACP. Catalyzes the first condensation reaction which initiates fatty acid synthesis and may therefore play a role in governing the total rate of fatty acid production. Possesses both acetoacetyl-ACP synthase and acetyl transacylase activities. Its substrate specificity determines the biosynthesis of branched-chain and/or straight-chain of fatty acids. The protein is Beta-ketoacyl-[acyl-carrier-protein] synthase III 1 of Bacteroides thetaiotaomicron (strain ATCC 29148 / DSM 2079 / JCM 5827 / CCUG 10774 / NCTC 10582 / VPI-5482 / E50).